The sequence spans 632 residues: Putative golgin subfamily A member 8I (632 aa).

The interval 1-77 is disordered; sequence MAEETQHNKL…SSATLKDLES (77 aa). Positions 38–50 are enriched in polar residues; the sequence is TNGSIPQTATSGG. 2 coiled-coil regions span residues 86-154 and 209-421; these read LDSR…HMKR and KLEQ…SLMA. Positions 352–362 are enriched in basic and acidic residues; that stretch reads KQEERIQEQHK. 4 disordered regions span residues 352-383, 423-445, 496-524, and 550-569; these read KQEERIQEQHKSLQQLAKPQSVFEEPNNENKS, PGEGHGGEHLDSEGEEAPQPMPS, LSEPGGRAKDAALGGGHHQAGAQGGDEGE, and AHNPADEPGPGAPAPQELGA. A compositionally biased stretch (gly residues) spans 508–520; sequence LGGGHHQAGAQGG. The interval 529-632 is golgi-targeting domain; the sequence is AADGIAAYSN…CWAWLPRRRR (104 aa). Over residues 555–568 the composition is skewed to low complexity; the sequence is DEPGPGAPAPQELG.

It belongs to the GOLGA8 family.

It localises to the golgi apparatus. It is found in the golgi stack membrane. May be involved in maintaining Golgi structure. The chain is Putative golgin subfamily A member 8I from Homo sapiens (Human).